The primary structure comprises 1256 residues: Cohesin subunit SA-3 (1256 aa).

Residues 1-22 (MPTLWSPSTQHHGSSSGSMSSP) are compositionally biased toward low complexity. Positions 1-110 (MPTLWSPSTQ…GGNDKNKSVP (110 aa)) are disordered. Residues 72–83 (RNVRKRAAKRPP) show a composition bias toward basic residues. An SCD domain is found at 324-409 (FVHRYRDILP…NRFKDRMVSM (86 aa)). 2 disordered regions span residues 1096-1169 (RRLQ…GPEL) and 1230-1256 (KLLH…MEDF). Residues 1113–1125 (NSGPTTPTLTSTA) are compositionally biased toward polar residues. A compositionally biased stretch (basic residues) spans 1126-1140 (VKRRQSPRTVGKRQK). Over residues 1144–1166 (GPGPGPGPGPGPGPGPGPGPGPG) the composition is skewed to pro residues. Residue serine 1234 is modified to Phosphoserine.

The protein belongs to the SCC3 family. In terms of assembly, component of the meiosis-specific cohesin complex, which also contains the SMC1 (SMC1A or SMC1B) and SMC3 heterodimer. Such complex likely contains RAD21, or the meiosis-specific related protein REC8. Interacts with CCDC79/TERB1; recruiting cohesin to telomeres to develop structural rigidity. In terms of processing, phosphorylated. In terms of tissue distribution, testis specific.

Its subcellular location is the nucleus. It localises to the chromosome. In terms of biological role, meiosis specific component of cohesin complex. The cohesin complex is required for the cohesion of sister chromatids after DNA replication. The cohesin complex apparently forms a large proteinaceous ring within which sister chromatids can be trapped. At anaphase, the complex is cleaved and dissociates from chromatin, allowing sister chromatids to segregate. The meiosis-specific cohesin complex probably replaces mitosis specific cohesin complex when it dissociates from chromatin during prophase I. The sequence is that of Cohesin subunit SA-3 (Stag3) from Rattus norvegicus (Rat).